A 466-amino-acid chain; its full sequence is Cysteine--tRNA ligase (466 aa).

Cys28 provides a ligand contact to Zn(2+). Residues 30 to 40 (PTVYNYIHIGN) carry the 'HIGH' region motif. Zn(2+)-binding residues include Cys208, His233, and Glu237. The short motif at 265–269 (KMSKS) is the 'KMSKS' region element. Residue Lys268 coordinates ATP.

It belongs to the class-I aminoacyl-tRNA synthetase family. Monomer. The cofactor is Zn(2+).

It localises to the cytoplasm. The enzyme catalyses tRNA(Cys) + L-cysteine + ATP = L-cysteinyl-tRNA(Cys) + AMP + diphosphate. This is Cysteine--tRNA ligase from Staphylococcus saprophyticus subsp. saprophyticus (strain ATCC 15305 / DSM 20229 / NCIMB 8711 / NCTC 7292 / S-41).